We begin with the raw amino-acid sequence, 37 residues long: Large ribosomal subunit protein bL36 (37 aa).

Belongs to the bacterial ribosomal protein bL36 family.

The protein is Large ribosomal subunit protein bL36 (rpmJ) of Mycoplasma sp.